Here is a 130-residue protein sequence, read N- to C-terminus: Small ribosomal subunit protein uS8 (130 aa).

It belongs to the universal ribosomal protein uS8 family. As to quaternary structure, part of the 30S ribosomal subunit. Contacts proteins S5 and S12.

One of the primary rRNA binding proteins, it binds directly to 16S rRNA central domain where it helps coordinate assembly of the platform of the 30S subunit. This is Small ribosomal subunit protein uS8 from Haemophilus influenzae (strain 86-028NP).